A 190-amino-acid polypeptide reads, in one-letter code: NADH-quinone oxidoreductase subunit B (190 aa).

Residues C67, C68, C132, and C162 each coordinate [4Fe-4S] cluster.

It belongs to the complex I 20 kDa subunit family. As to quaternary structure, NDH-1 is composed of 14 different subunits. Subunits NuoB, C, D, E, F, and G constitute the peripheral sector of the complex. [4Fe-4S] cluster serves as cofactor.

It is found in the cell inner membrane. The catalysed reaction is a quinone + NADH + 5 H(+)(in) = a quinol + NAD(+) + 4 H(+)(out). Functionally, NDH-1 shuttles electrons from NADH, via FMN and iron-sulfur (Fe-S) centers, to quinones in the respiratory chain. The immediate electron acceptor for the enzyme in this species is believed to be ubiquinone. Couples the redox reaction to proton translocation (for every two electrons transferred, four hydrogen ions are translocated across the cytoplasmic membrane), and thus conserves the redox energy in a proton gradient. This is NADH-quinone oxidoreductase subunit B from Anaplasma marginale (strain Florida).